Here is a 561-residue protein sequence, read N- to C-terminus: DNA ligase B (561 aa).

The active-site N6-AMP-lysine intermediate is Lys-125.

Belongs to the NAD-dependent DNA ligase family. LigB subfamily.

It carries out the reaction NAD(+) + (deoxyribonucleotide)n-3'-hydroxyl + 5'-phospho-(deoxyribonucleotide)m = (deoxyribonucleotide)n+m + AMP + beta-nicotinamide D-nucleotide.. Its function is as follows. Catalyzes the formation of phosphodiester linkages between 5'-phosphoryl and 3'-hydroxyl groups in double-stranded DNA using NAD as a coenzyme and as the energy source for the reaction. In Salmonella choleraesuis (strain SC-B67), this protein is DNA ligase B.